Here is a 201-residue protein sequence, read N- to C-terminus: MWISLCIGFLGLCSVLIGSCILFLHWKKNLQREERAQQWVEVMRAATFTYSPLLYWINKRRYHGMNVAINTGPPPAVTKTEPEDQNSDSLWELDLSEGRNFVVQDSSPRGEASDLLQHVLGIPKQPQSSKMSQPRTDSPFPLPIFQEVPFALSLCHLPPMLNHSVSYPLANRPERNVPFCSLPTLAHGTNCFNAKPFALEL.

Residues 3-23 form a helical membrane-spanning segment; the sequence is ISLCIGFLGLCSVLIGSCILF.

Its subcellular location is the membrane. The polypeptide is Testis-expressed protein 38 (Tex38) (Mus musculus (Mouse)).